We begin with the raw amino-acid sequence, 214 residues long: Urease accessory protein UreF (214 aa).

This sequence belongs to the UreF family. UreD, UreF and UreG form a complex that acts as a GTP-hydrolysis-dependent molecular chaperone, activating the urease apoprotein by helping to assemble the nickel containing metallocenter of UreC. The UreE protein probably delivers the nickel.

The protein localises to the cytoplasm. In terms of biological role, required for maturation of urease via the functional incorporation of the urease nickel metallocenter. The polypeptide is Urease accessory protein UreF (Ruegeria sp. (strain TM1040) (Silicibacter sp.)).